We begin with the raw amino-acid sequence, 182 residues long: Large ribosomal subunit protein uL6 (182 aa).

This sequence belongs to the universal ribosomal protein uL6 family. Part of the 50S ribosomal subunit.

Its function is as follows. This protein binds to the 23S rRNA, and is important in its secondary structure. It is located near the subunit interface in the base of the L7/L12 stalk, and near the tRNA binding site of the peptidyltransferase center. The polypeptide is Large ribosomal subunit protein uL6 (Trichormus variabilis (strain ATCC 29413 / PCC 7937) (Anabaena variabilis)).